Reading from the N-terminus, the 37-residue chain is Large ribosomal subunit protein bL36c (37 aa).

Belongs to the bacterial ribosomal protein bL36 family.

The protein resides in the plastid. The protein localises to the chloroplast. This Nephroselmis olivacea (Green alga) protein is Large ribosomal subunit protein bL36c (rpl36).